A 278-amino-acid polypeptide reads, in one-letter code: uncharacterized protein (278 aa).

Belongs to the manganese catalase family.

This is an uncharacterized protein from Bacillus subtilis (strain 168).